The primary structure comprises 311 residues: 4-hydroxy-3-methylbut-2-enyl diphosphate reductase (311 aa).

Cysteine 14 is a [4Fe-4S] cluster binding site. (2E)-4-hydroxy-3-methylbut-2-enyl diphosphate-binding residues include histidine 43 and histidine 76. 2 residues coordinate dimethylallyl diphosphate: histidine 43 and histidine 76. The isopentenyl diphosphate site is built by histidine 43 and histidine 76. Cysteine 98 is a [4Fe-4S] cluster binding site. (2E)-4-hydroxy-3-methylbut-2-enyl diphosphate is bound at residue histidine 126. Histidine 126 is a dimethylallyl diphosphate binding site. Histidine 126 serves as a coordination point for isopentenyl diphosphate. Glutamate 128 (proton donor) is an active-site residue. (2E)-4-hydroxy-3-methylbut-2-enyl diphosphate is bound at residue threonine 166. Cysteine 196 lines the [4Fe-4S] cluster pocket. 4 residues coordinate (2E)-4-hydroxy-3-methylbut-2-enyl diphosphate: serine 224, serine 225, asparagine 226, and serine 268. Dimethylallyl diphosphate-binding residues include serine 224, serine 225, asparagine 226, and serine 268. Isopentenyl diphosphate-binding residues include serine 224, serine 225, asparagine 226, and serine 268.

It belongs to the IspH family. It depends on [4Fe-4S] cluster as a cofactor.

The catalysed reaction is isopentenyl diphosphate + 2 oxidized [2Fe-2S]-[ferredoxin] + H2O = (2E)-4-hydroxy-3-methylbut-2-enyl diphosphate + 2 reduced [2Fe-2S]-[ferredoxin] + 2 H(+). The enzyme catalyses dimethylallyl diphosphate + 2 oxidized [2Fe-2S]-[ferredoxin] + H2O = (2E)-4-hydroxy-3-methylbut-2-enyl diphosphate + 2 reduced [2Fe-2S]-[ferredoxin] + 2 H(+). It functions in the pathway isoprenoid biosynthesis; dimethylallyl diphosphate biosynthesis; dimethylallyl diphosphate from (2E)-4-hydroxy-3-methylbutenyl diphosphate: step 1/1. Its pathway is isoprenoid biosynthesis; isopentenyl diphosphate biosynthesis via DXP pathway; isopentenyl diphosphate from 1-deoxy-D-xylulose 5-phosphate: step 6/6. Functionally, catalyzes the conversion of 1-hydroxy-2-methyl-2-(E)-butenyl 4-diphosphate (HMBPP) into a mixture of isopentenyl diphosphate (IPP) and dimethylallyl diphosphate (DMAPP). Acts in the terminal step of the DOXP/MEP pathway for isoprenoid precursor biosynthesis. In Chromobacterium violaceum (strain ATCC 12472 / DSM 30191 / JCM 1249 / CCUG 213 / NBRC 12614 / NCIMB 9131 / NCTC 9757 / MK), this protein is 4-hydroxy-3-methylbut-2-enyl diphosphate reductase.